A 615-amino-acid polypeptide reads, in one-letter code: Lipoprotein LpqB (615 aa).

Positions 1 to 29 are cleaved as a signal peptide; that stretch reads MGADRGRGGRRRPARVVAYAVGGVVLLAG. Cys-30 carries the N-palmitoyl cysteine lipid modification. Residue Cys-30 is the site of S-diacylglycerol cysteine attachment. The segment at 100–123 is disordered; sequence PDESATVLAGGPGTESDHSGNRED. Positions 114–123 are enriched in basic and acidic residues; sequence ESDHSGNRED.

It belongs to the LpqB lipoprotein family.

Its subcellular location is the cell membrane. The polypeptide is Lipoprotein LpqB (Streptomyces coelicolor (strain ATCC BAA-471 / A3(2) / M145)).